The primary structure comprises 735 residues: Type-3 glutamine synthetase (735 aa).

The 95-residue stretch at 89–183 (THYCHWFLPL…IPTAFCSWTG (95 aa)) folds into the GS beta-grasp domain. The GS catalytic domain occupies 188 to 621 (QKTPLLRSME…SLYDLVSTLV (434 aa)).

It belongs to the glutamine synthetase family. Type 3 subfamily. In terms of assembly, homohexamer.

The catalysed reaction is L-glutamate + NH4(+) + ATP = L-glutamine + ADP + phosphate + H(+). The polypeptide is Type-3 glutamine synthetase (glnA3) (Dictyostelium discoideum (Social amoeba)).